A 280-amino-acid chain; its full sequence is SPX domain-containing protein 2 (280 aa).

The region spanning 1–162 is the SPX domain; that stretch reads MKFGKSLSSQ…GSMIRLPFVQ (162 aa). Disordered regions lie at residues 191–244 and 257–280; these read PTNE…KSTV and GSST…EPGR.

Interacts (via SPX domain) with PHR2 (via C-terminus). Interacts with RLI1 in the nucleus to prevents its positive regulation of leaf inclination during phosphate (Pi) starvation. In terms of tissue distribution, predominantly expressed in roots, leaves and seeds. Localized in leaves lamina joints.

Its subcellular location is the nucleus. Its function is as follows. Inhibits PHR2 DNA-binding activity via a phosphate (Pi)-dependent protein interaction. Together with SPX1, plays a negative role in the regulation of leaf inclination by preventing RLI1 transcription factor activity in Pi depleted conditions. The polypeptide is SPX domain-containing protein 2 (Oryza sativa subsp. japonica (Rice)).